The primary structure comprises 163 residues: Small ribosomal subunit protein bS6 (163 aa).

The segment at 97-163 (EEGQTAMLTN…GRNEGEGDRA (67 aa)) is disordered. Basic and acidic residues predominate over residues 122 to 163 (RGPRRDFGDRGPRRDFGDRGPRRDGDGPRAEGGRNEGEGDRA).

The protein belongs to the bacterial ribosomal protein bS6 family.

Functionally, binds together with bS18 to 16S ribosomal RNA. This chain is Small ribosomal subunit protein bS6, found in Rhodospirillum centenum (strain ATCC 51521 / SW).